Here is a 315-residue protein sequence, read N- to C-terminus: Methionyl-tRNA formyltransferase (315 aa).

A (6S)-5,6,7,8-tetrahydrofolate-binding site is contributed by 110-113 (SLLP).

This sequence belongs to the Fmt family.

The enzyme catalyses L-methionyl-tRNA(fMet) + (6R)-10-formyltetrahydrofolate = N-formyl-L-methionyl-tRNA(fMet) + (6S)-5,6,7,8-tetrahydrofolate + H(+). In terms of biological role, attaches a formyl group to the free amino group of methionyl-tRNA(fMet). The formyl group appears to play a dual role in the initiator identity of N-formylmethionyl-tRNA by promoting its recognition by IF2 and preventing the misappropriation of this tRNA by the elongation apparatus. This chain is Methionyl-tRNA formyltransferase, found in Lactobacillus delbrueckii subsp. bulgaricus (strain ATCC BAA-365 / Lb-18).